Here is a 63-residue protein sequence, read N- to C-terminus: Bowman-birk type proteinase inhibitor (63 aa).

Cystine bridges form between Cys-7–Cys-61, Cys-8–Cys-23, Cys-11–Cys-57, Cys-13–Cys-21, Cys-31–Cys-38, Cys-35–Cys-50, and Cys-40–Cys-48.

Its function is as follows. Inhibits trypsin, chymotrypsin, plasmin and factor XIIa. Does not inhibit factor Xa, thrombin and plasma kallikrein. The protein is Bowman-birk type proteinase inhibitor of Amburana acreana (Cerejeira).